Consider the following 197-residue polypeptide: dITP/XTP pyrophosphatase (197 aa).

Residue 8–13 (TGNPGK) participates in substrate binding. Positions 40 and 69 each coordinate Mg(2+). Asp-69 functions as the Proton acceptor in the catalytic mechanism. Substrate contacts are provided by residues Ser-70, 154 to 157 (FGYD), Lys-177, and 182 to 183 (HR).

This sequence belongs to the HAM1 NTPase family. Homodimer. It depends on Mg(2+) as a cofactor.

It carries out the reaction XTP + H2O = XMP + diphosphate + H(+). The enzyme catalyses dITP + H2O = dIMP + diphosphate + H(+). It catalyses the reaction ITP + H2O = IMP + diphosphate + H(+). In terms of biological role, pyrophosphatase that catalyzes the hydrolysis of nucleoside triphosphates to their monophosphate derivatives, with a high preference for the non-canonical purine nucleotides XTP (xanthosine triphosphate), dITP (deoxyinosine triphosphate) and ITP. Seems to function as a house-cleaning enzyme that removes non-canonical purine nucleotides from the nucleotide pool, thus preventing their incorporation into DNA/RNA and avoiding chromosomal lesions. The sequence is that of dITP/XTP pyrophosphatase from Yersinia pseudotuberculosis serotype I (strain IP32953).